The sequence spans 687 residues: Adhesion G-protein coupled receptor G1 (687 aa).

Positions 1-25 (MAVQVLRQMVYFLLSLFSLVQGAHS) are cleaved as a signal peptide. 26–33 (GSPREDFR) is a heparin binding site. Topologically, residues 26–402 (GSPREDFRFC…TEVEATHKHY (377 aa)) are extracellular. Disulfide bonds link Cys35–Cys91 and Cys121–Cys177. N-linked (GlcNAc...) asparagine glycans are attached at residues Asn39, Asn148, and Asn171. 190 to 200 (LQHPQKAAKRP) is a heparin binding site. A GAIN-B domain is found at 224 to 395 (DTLSFEEDRV…AVLMVSSTEV (172 aa)). Asn234, Asn303, Asn324, and Asn341 each carry an N-linked (GlcNAc...) asparagine glycan. Disulfide bonds link Cys346–Cys377 and Cys366–Cys379. The segment at 346–395 (CVFWVEDPASSSTGSWSSAGCETVSRDTQTSCLCNHLTYFAVLMVSSTEV) is GPS. The tract at residues 384 to 397 (YFAVLMVSSTEVEA) is stachel. Residues 403–423 (LTLLSYVGCVISALACVFTIA) traverse the membrane as a helical segment. The Cytoplasmic segment spans residues 424–442 (AYLCSRRKSRDYTIKVHMN). A helical membrane pass occupies residues 443 to 463 (LLSAVFLLDVSFLLSEPVALT). At 464–471 (GSEAACRT) the chain is on the extracellular side. The chain crosses the membrane as a helical span at residues 472 to 492 (SAMFLHFSLLACLSWMGLEGY). Topologically, residues 493 to 512 (NLYRLVVEVFGTYVPGYLLK) are cytoplasmic. Residues 513–533 (LSIVGWGFPVFLVTLVALVDV) traverse the membrane as a helical segment. Topologically, residues 534–570 (NNYGPIILAVRRTPERVTYPSMCWIRDSLVSYVTNLG) are extracellular. The chain crosses the membrane as a helical span at residues 571–591 (LFSLVFLFNLAMLATMVVQIL). The Cytoplasmic portion of the chain corresponds to 592 to 603 (RLRPHSQNWPHV). Residues 604 to 624 (LTLLGLSLVLGLPWALVFFSF) form a helical membrane-spanning segment. Over 625–630 (ASGTFQ) the chain is Extracellular. The chain crosses the membrane as a helical span at residues 631–651 (LVILYLFSIITSFQGFLIFLW). Over 652–687 (YWSMRFQAQGGPSPLKNNSDSAKLPISSGSTSSSRI) the chain is Cytoplasmic. The disordered stretch occupies residues 664 to 687 (SPLKNNSDSAKLPISSGSTSSSRI). Positions 678–687 (SSGSTSSSRI) are enriched in low complexity.

Belongs to the G-protein coupled receptor 2 family. LN-TM7 subfamily. In terms of assembly, heterodimer of 2 chains generated by proteolytic processing; the large extracellular N-terminal fragment (ADGRG1 NT) and the membrane-bound C-terminal fragment (ADGRG1-CT) predominantly remain associated and non-covalently linked. ADGRG1 NT self-associates in a trans-trans manner; the homophilic interaction enhances receptor signaling. Interacts with TGM2. Interacts with heparin; leading to the reduction of ADGRG1 shedding. Interacts with COL3A1. Part of a GPCR-tetraspanin complex at least consisting of ADGRG1, CD81, eventually CD9, and GNA11 in which CD81 is enhancing the association of ADGRG1 with GNA11. Post-translationally, autoproteolytically cleaved into 2 fragments; the large extracellular N-terminal fragment and the membroune-bound C-terminal fragment predominantly remain associated and non-covalently linked. In terms of processing, N-glycosylated. The secreted ADGRG1 N-terminal fragment is heavily glycosylated. Ubiquitinated. Undergoes polyubiquitination upon activation. Expressed in neural progenitor cells in fetal forbrain. Expressed in migrating neurons. Expressed in radial glial endfeet (at protein level). Expressed in peritubular myoid cells, Sertoli cells, and germ cells of the testis.

Its subcellular location is the cell membrane. It localises to the secreted. The protein localises to the membrane raft. Its activity is regulated as follows. Forms a heterodimer of 2 chains generated by proteolytic processing that remain associated through non-covalent interactions mediated by the GAIN-B domain. In the inactivated receptor, the Stachel sequence (also named stalk) is embedded in the GAIN-B domain, where it adopts a beta-strand conformation. On activation, the Stachel moves into the 7 transmembrane region and adopts a twisted hook-shaped configuration that forms contacts within the receptor, leading to coupling of a G-alpha protein, which activates signaling. The cleaved GAIN-B and N-terminal domains can then dissociate from the rest of the receptor. Activated by the small-molecule agonist, 3-alpha-acetoxydihydrodeoxygedunin (3-alpha-DOG). Functionally, adhesion G-protein coupled receptor (aGPCR) for steroid hormone 17alpha-hydroxypregnenolone (17-OH), which is involved in cell adhesion and cell-cell interactions. Ligand binding causes a conformation change that triggers signaling via guanine nucleotide-binding proteins (G proteins) and modulates the activity of downstream effectors, such as RhoA pathway. ADGRG1 is coupled to G(12) and/or G(13) G proteins (GNA12 and GNA13, respectively) and mediates the activation Rho small GTPases. Acts as a potent suppressor of ferroptosis: binding to 17-OH-binding initiates signaling that down-regulates CD36 and alleviates ferroptosis-induced liver injury. Ligand-binding also induces cell adhesion activity via association with proteins such as collagen III/COL3A1 and TGM2. Mediates cell matrix adhesion in developing neurons and hematopoietic stem cells. Involved in cortical development, specifically in maintenance of the pial basement membrane integrity and in cortical lamination: association with COL3A1 in the developing brain inhibits neuronal migration via activation of the RhoA pathway. Together with TGM2, acts as a regulator of myelination and myelin repair in oligodendrocyte precursor cells. Acts as a hemostatic sensor of shear force: G protein-coupled receptor signaling is activated in response to shear force in platelets, promoting G(13) G protein signaling, and platelet shape change and aggregation in a COL3A1-dependent manner. Acts as an inhibitor of VEGFA production thereby inhibiting angiogenesis through a signaling pathway mediated by PRKCA. Plays a role in the maintenance of hematopoietic stem cells in bone marrow niche. Plays an essential role in testis development. Its function is as follows. Adhesion G-protein coupled receptor (aGPCR) for phosphatidylserine, which is involved in microglia-mediated synapse pruning during development. Required to maintain appropriate synaptic numbers in several brain regions in a time- and circuit-dependent fashion: phosphatidylserine-binding acts as a 'eat-me' signal for apoptotic cells, leading to microglial engulfment of phosphatidylserine-positive synapses. The sequence is that of Adhesion G-protein coupled receptor G1 from Mus musculus (Mouse).